The chain runs to 417 residues: UDP-N-acetylglucosamine 1-carboxyvinyltransferase (417 aa).

Phosphoenolpyruvate is bound at residue 22–23; the sequence is KN. Position 94 (Arg94) interacts with UDP-N-acetyl-alpha-D-glucosamine. Cys118 functions as the Proton donor in the catalytic mechanism. At Cys118 the chain carries 2-(S-cysteinyl)pyruvic acid O-phosphothioketal. Residues 123–127, Asp306, and Ile328 each bind UDP-N-acetyl-alpha-D-glucosamine; that span reads RPIDQ.

The protein belongs to the EPSP synthase family. MurA subfamily.

It is found in the cytoplasm. It catalyses the reaction phosphoenolpyruvate + UDP-N-acetyl-alpha-D-glucosamine = UDP-N-acetyl-3-O-(1-carboxyvinyl)-alpha-D-glucosamine + phosphate. Its pathway is cell wall biogenesis; peptidoglycan biosynthesis. Functionally, cell wall formation. Adds enolpyruvyl to UDP-N-acetylglucosamine. The protein is UDP-N-acetylglucosamine 1-carboxyvinyltransferase of Clostridium botulinum (strain ATCC 19397 / Type A).